Consider the following 419-residue polypeptide: Diaminopimelate decarboxylase (419 aa).

K56 carries the N6-(pyridoxal phosphate)lysine modification. Pyridoxal 5'-phosphate contacts are provided by residues G234 and 274-277 (EPGR). Substrate is bound by residues R277, R312, and Y316. The Proton donor role is filled by C343. Substrate contacts are provided by E344 and Y372. A pyridoxal 5'-phosphate-binding site is contributed by Y372.

Belongs to the Orn/Lys/Arg decarboxylase class-II family. LysA subfamily. As to quaternary structure, homodimer. Pyridoxal 5'-phosphate serves as cofactor.

It catalyses the reaction meso-2,6-diaminopimelate + H(+) = L-lysine + CO2. Its pathway is amino-acid biosynthesis; L-lysine biosynthesis via DAP pathway; L-lysine from DL-2,6-diaminopimelate: step 1/1. Functionally, specifically catalyzes the decarboxylation of meso-diaminopimelate (meso-DAP) to L-lysine. The chain is Diaminopimelate decarboxylase from Archaeoglobus fulgidus (strain ATCC 49558 / DSM 4304 / JCM 9628 / NBRC 100126 / VC-16).